A 480-amino-acid polypeptide reads, in one-letter code: GTPase Obg (480 aa).

Residues 2-159 (TRFIDRVVIH…RDLTLELKTV (158 aa)) enclose the Obg domain. Residues 160-341 (ADVGLVGFPS…LTFALWDMVA (182 aa)) enclose the OBG-type G domain. Residues 166–173 (GFPSAGKS), 191–195 (FTTLA), 212–215 (DVPG), 292–295 (NKID), and 322–324 (STV) each bind GTP. 2 residues coordinate Mg(2+): Ser173 and Thr193. Residues 359–437 (PIPVDETAFS…IGDMTFDWEP (79 aa)) form the OCT domain. A disordered region spans residues 441–480 (AGVDVPLTGRGTDVRLEQTDRVGADERKAARKARRQSGDE). Over residues 452 to 468 (TDVRLEQTDRVGADERK) the composition is skewed to basic and acidic residues. Residues 469-480 (AARKARRQSGDE) show a composition bias toward basic residues.

The protein belongs to the TRAFAC class OBG-HflX-like GTPase superfamily. OBG GTPase family. In terms of assembly, monomer. The cofactor is Mg(2+).

The protein localises to the cytoplasm. In terms of biological role, an essential GTPase which binds GTP, GDP and possibly (p)ppGpp with moderate affinity, with high nucleotide exchange rates and a fairly low GTP hydrolysis rate. Plays a role in control of the cell cycle, stress response, ribosome biogenesis and in those bacteria that undergo differentiation, in morphogenesis control. The sequence is that of GTPase Obg from Mycolicibacterium vanbaalenii (strain DSM 7251 / JCM 13017 / BCRC 16820 / KCTC 9966 / NRRL B-24157 / PYR-1) (Mycobacterium vanbaalenii).